The primary structure comprises 364 residues: Biotin synthase (364 aa).

Residues 14-36 (DTIPPGTETPYASPSHARTEEAP) form a disordered region. Residues 70–308 (RKGPLATTCG…QRDILVCGGR (239 aa)) enclose the Radical SAM core domain. Cysteine 88, cysteine 92, and cysteine 95 together coordinate [4Fe-4S] cluster. [2Fe-2S] cluster-binding residues include cysteine 164 and cysteine 233.

It belongs to the radical SAM superfamily. Biotin synthase family. Homodimer. The cofactor is [4Fe-4S] cluster. Requires [2Fe-2S] cluster as cofactor.

The enzyme catalyses (4R,5S)-dethiobiotin + (sulfur carrier)-SH + 2 reduced [2Fe-2S]-[ferredoxin] + 2 S-adenosyl-L-methionine = (sulfur carrier)-H + biotin + 2 5'-deoxyadenosine + 2 L-methionine + 2 oxidized [2Fe-2S]-[ferredoxin]. It functions in the pathway cofactor biosynthesis; biotin biosynthesis; biotin from 7,8-diaminononanoate: step 2/2. Catalyzes the conversion of dethiobiotin (DTB) to biotin by the insertion of a sulfur atom into dethiobiotin via a radical-based mechanism. In Nitratidesulfovibrio vulgaris (strain DSM 19637 / Miyazaki F) (Desulfovibrio vulgaris), this protein is Biotin synthase.